Here is a 287-residue protein sequence, read N- to C-terminus: Mitochondrial dicarboxylate carrier (287 aa).

Solcar repeat units follow at residues serine 7–tyrosine 87, asparagine 100–leucine 187, and aspartate 196–histidine 279. 3 consecutive transmembrane segments (helical) span residues tryptophan 9–leucine 29, glycine 62–tyrosine 81, and valine 102–valine 122. The residue at position 158 (lysine 158) is an N6-acetyllysine. Helical transmembrane passes span glycine 162–tyrosine 181, phenylalanine 202–leucine 222, and glycine 254–glutamate 274.

Belongs to the mitochondrial carrier (TC 2.A.29) family. As to expression, expressed at very high levels in white adipose tissue. And at low levels in brown adipose tissue, kidney and liver.

It localises to the mitochondrion inner membrane. The catalysed reaction is (S)-malate(in) + phosphate(out) = (S)-malate(out) + phosphate(in). The enzyme catalyses malonate(out) + (S)-malate(in) = malonate(in) + (S)-malate(out). It carries out the reaction (S)-malate(in) + succinate(out) = (S)-malate(out) + succinate(in). It catalyses the reaction (S)-malate(in) + sulfate(out) = (S)-malate(out) + sulfate(in). The catalysed reaction is malonate(out) + phosphate(in) = malonate(in) + phosphate(out). The enzyme catalyses succinate(out) + phosphate(in) = succinate(in) + phosphate(out). It carries out the reaction sulfate(out) + phosphate(in) = sulfate(in) + phosphate(out). It catalyses the reaction malonate(out) + succinate(in) = malonate(in) + succinate(out). Its activity is regulated as follows. Regulated by circadian protein CLOCK (Circadian Locomotor Output Cycles Kaput). Catalyzes the electroneutral exchange or flux of physiologically important metabolites such as dicarboxylates (malonate, malate, succinate), inorganic sulfur-containing anions, and phosphate, across mitochondrial inner membrane. Plays an important role in gluconeogenesis, fatty acid metabolism, urea synthesis, and sulfur metabolism, particularly in liver, by supplying the substrates for the different metabolic processes. Regulates fatty acid release from adipocytes, and contributes to systemic insulin sensitivity. The polypeptide is Mitochondrial dicarboxylate carrier (Mus musculus (Mouse)).